The primary structure comprises 396 residues: Nitrate regulatory protein (396 aa).

Residues 37 to 284 form the NIT domain; sequence GQISALVHML…VDLLNAADAL (248 aa). Residues 323–384 form the ANTAR domain; sequence LQQLSGQLAS…RMVEIARALL (62 aa).

In terms of biological role, nitrate- and nitrite-responsive positive regulator for nasFEDCBA operon expression. NasR protein binds to the factor-independent terminator site located in the nasF operon leader RNA to effect transcription antitermination. The chain is Nitrate regulatory protein (nasR) from Klebsiella oxytoca.